The sequence spans 334 residues: uncharacterized protein (334 aa).

2 consecutive transmembrane segments (helical) span residues 19 to 39 (AFLR…SFGI) and 55 to 75 (LIVL…AALF). Residues 308–334 (KPESKSSSQKSVETEIEKEVKDKLAKN) are disordered. Over residues 319–334 (VETEIEKEVKDKLAKN) the composition is skewed to basic and acidic residues.

The protein resides in the cell membrane. This is an uncharacterized protein from Mycoplasma genitalium (strain ATCC 33530 / DSM 19775 / NCTC 10195 / G37) (Mycoplasmoides genitalium).